A 384-amino-acid chain; its full sequence is MYMKKPAIPDDVIERVQQGKCTKEDALLLLEGNPFELFELANKLRASTVGDVVSYVVNRNIYITNKCVGTCGFCAYRTDEGYILSIEEILKQTEEAREAGAVEVCVQGGYTPEADMEFYLEIIEAIKSGFPDICIHALSPMEVNYAAGLSGMSVEDALRKLKKCGLDSLTGTSAEILSDRVRKIICPGKITTQQWVDTVTAAHRAGISTNSTIMYGHVETLEERLDHVFTIREIQKETGGISELIPMSFLPYNNPIGEKMMASGKFTSTGLEDLQLIAISRIILHTHVNNIQATWVKLGKKLAQFALQCGANDLGGTLMEDQISTASGGSYGEYVSPAEFEWMIKGAGRVPIQRDTLYRKVEPRLPASEGLLPGYVKPKMGSKE.

A Radical SAM core domain is found at 53–286; that stretch reads VSYVVNRNIY…IAISRIILHT (234 aa). The [4Fe-4S] cluster site is built by C67, C71, and C74.

Belongs to the radical SAM superfamily. CofH family. Consists of two subunits, CofG and CofH. It depends on [4Fe-4S] cluster as a cofactor.

It catalyses the reaction 5-amino-6-(D-ribitylamino)uracil + L-tyrosine + S-adenosyl-L-methionine = 5-amino-5-(4-hydroxybenzyl)-6-(D-ribitylimino)-5,6-dihydrouracil + 2-iminoacetate + 5'-deoxyadenosine + L-methionine + H(+). It functions in the pathway cofactor biosynthesis; coenzyme F0 biosynthesis. Catalyzes the radical-mediated synthesis of 5-amino-5-(4-hydroxybenzyl)-6-(D-ribitylimino)-5,6-dihydrouracil from 5-amino-6-(D-ribitylamino)uracil and L-tyrosine. The sequence is that of 5-amino-6-(D-ribitylamino)uracil--L-tyrosine 4-hydroxyphenyl transferase 2 from Methanosarcina acetivorans (strain ATCC 35395 / DSM 2834 / JCM 12185 / C2A).